The primary structure comprises 295 residues: MSSFRPVFRSRWLPYLLVAPQLVITVIFFIWPAGEALWYSLQSVDPFGFSSQFVGLENFVALFHDSYYLDAFWTTIKFSALVTFSGLLVSLFFAALVDYVVRGSRFYQTLMLLPYAVAPAVAAVLWIFLFNPGRGLITHFLGEFGYDWNHAQNSGQAMFLVVFASVWKQISYNFLFFFAALQSIPRSLVEAAAIDGAGPIRRFFRLSLPLIAPVSFFLLVVNLVYAFFDTFPVIDAATAGGPVQATTTLIYKIYREGFTGLDLSASAAQSVVLMFLVIILTVVQFRYVESKVRYQ.

The Cytoplasmic segment spans residues 1 to 11; it reads MSSFRPVFRSR. Residues 12–32 traverse the membrane as a helical segment; the sequence is WLPYLLVAPQLVITVIFFIWP. The Periplasmic portion of the chain corresponds to 33–80; sequence AGEALWYSLQSVDPFGFSSQFVGLENFVALFHDSYYLDAFWTTIKFSA. Residues 76–284 form the ABC transmembrane type-1 domain; the sequence is IKFSALVTFS…FLVIILTVVQ (209 aa). Residues 81 to 101 form a helical membrane-spanning segment; that stretch reads LVTFSGLLVSLFFAALVDYVV. Over 102 to 109 the chain is Cytoplasmic; it reads RGSRFYQT. A helical transmembrane segment spans residues 110–130; it reads LMLLPYAVAPAVAAVLWIFLF. Residues 131–157 lie on the Periplasmic side of the membrane; the sequence is NPGRGLITHFLGEFGYDWNHAQNSGQA. A helical membrane pass occupies residues 158–178; sequence MFLVVFASVWKQISYNFLFFF. Over 179-207 the chain is Cytoplasmic; that stretch reads AALQSIPRSLVEAAAIDGAGPIRRFFRLS. A helical membrane pass occupies residues 208–228; the sequence is LPLIAPVSFFLLVVNLVYAFF. Topologically, residues 229 to 262 are periplasmic; the sequence is DTFPVIDAATAGGPVQATTTLIYKIYREGFTGLD. A helical transmembrane segment spans residues 263–283; the sequence is LSASAAQSVVLMFLVIILTVV. At 284 to 295 the chain is on the cytoplasmic side; the sequence is QFRYVESKVRYQ.

Belongs to the binding-protein-dependent transport system permease family. UgpAE subfamily. The complex is composed of two ATP-binding proteins (UgpC), two transmembrane proteins (UgpA and UgpE) and a solute-binding protein (UgpB).

It is found in the cell inner membrane. Functionally, part of the ABC transporter complex UgpBAEC involved in sn-glycerol-3-phosphate (G3P) import. Probably responsible for the translocation of the substrate across the membrane. This chain is sn-glycerol-3-phosphate transport system permease protein UgpA (ugpA), found in Salmonella choleraesuis (strain SC-B67).